The sequence spans 370 residues: Versatile peroxidase VPS1 (370 aa).

Positions 1 to 20 are cleaved as a signal peptide; the sequence is MAFAKLSAFVLALGATVALG. Residues 21-31 constitute a propeptide that is removed on maturation; that stretch reads ESPTHRCLNKR. 4 disulfide bridges follow: Cys-34–Cys-46, Cys-45–Cys-315, Cys-65–Cys-151, and Cys-279–Cys-344. Mn(2+) is bound by residues Glu-67 and Glu-71. His-78 functions as the Proton acceptor in the catalytic mechanism. Ca(2+) contacts are provided by Asp-79, Gly-97, Asp-99, and Ser-101. A glycan (N-linked (GlcNAc...) asparagine) is linked at Asn-133. The Tryptophan radical intermediate role is filled by Trp-201. Residue His-206 coordinates heme b. Thr-207 contributes to the Ca(2+) binding site. 210–214 lines the heme b pocket; it reads AADHV. Asp-212 serves as a coordination point for Mn(2+). Residues Asp-224, Thr-226, Thr-229, and Asp-231 each coordinate Ca(2+).

The protein belongs to the peroxidase family. Ligninase subfamily. Heme b is required as a cofactor. The cofactor is Ca(2+).

It is found in the secreted. The catalysed reaction is 1-(4-hydroxy-3-methoxyphenyl)-2-(2-methoxyphenoxy)propane-1,3-diol + H2O2 = guaiacol + vanillin + glycolaldehyde + H2O. It carries out the reaction 2 Mn(2+) + H2O2 + 2 H(+) = 2 Mn(3+) + 2 H2O. A versatile ligninolytic peroxidase that combines the substrate specificity characteristics of the two other ligninolytic peroxidases, manganese peroxidase and lignin peroxidase. The sequence is that of Versatile peroxidase VPS1 (vps1) from Pleurotus eryngii (Boletus of the steppes).